The following is a 561-amino-acid chain: Eukaryotic translation initiation factor 3 subunit D-1 (561 aa).

Positions 98–164 (VQKPPHQRGR…RGPPPKMRES (67 aa)) are disordered. A compositionally biased stretch (basic residues) spans 100–121 (KPPHQRGRFRNMRNSRSGRGRN). A Phosphothreonine modification is found at T128. Residues 289 to 303 (EFDLLTVNETSVEPP) are RNA gate.

It belongs to the eIF-3 subunit D family. Component of the eukaryotic translation initiation factor 3 (eIF-3) complex. The eIF-3 complex interacts with pix.

Its subcellular location is the cytoplasm. Its function is as follows. mRNA cap-binding component of the eukaryotic translation initiation factor 3 (eIF-3) complex, which is involved in protein synthesis of a specialized repertoire of mRNAs and, together with other initiation factors, stimulates binding of mRNA and methionyl-tRNAi to the 40S ribosome. The eIF-3 complex specifically targets and initiates translation of a subset of mRNAs involved in cell proliferation. In the eIF-3 complex, eif3d specifically recognizes and binds the 7-methylguanosine cap of a subset of mRNAs. This Drosophila ananassae (Fruit fly) protein is Eukaryotic translation initiation factor 3 subunit D-1.